Consider the following 235-residue polypeptide: Rab-like protein 3 (235 aa).

Residues 1–235 form a small GTPase-like region; it reads MASLDRVKVL…GGNFKSLHYD (235 aa). Residues 16-21, 148-150, and 179-180 each bind GTP; these read GVGKSS, KLD, and DC.

It belongs to the small GTPase superfamily. Rab family. As to quaternary structure, homodimer.

Required for KRAS signaling regulation and modulation of cell proliferation. Regulator of KRAS prenylation, and probably prenylation of other small GTPases. Required for lymphocyte development and function. Not required for myeloid cell development. In Xenopus tropicalis (Western clawed frog), this protein is Rab-like protein 3 (rabl3).